The sequence spans 115 residues: Histone H2A-Bbd type 2/3 (115 aa).

A disordered region spans residues 1–21 (MPRRRRRRGSSGAGGRGRTCS). The docking domain stretch occupies residues 87–115 (LLDMVVHNDRLLSTLFNTTTISQVAPGED).

The protein belongs to the histone H2A family. In terms of assembly, the nucleosome is a histone octamer containing two molecules each of H2A, H2B, H3 and H4 assembled in one H3-H4 heterotetramer and two H2A-H2B heterodimers. May be incorporated into a proportion of nucleosomes, replacing one or more H2A molecules. Present in mature sperm.

Its subcellular location is the nucleus. The protein resides in the chromosome. In terms of biological role, atypical histone H2A which can replace conventional H2A in some nucleosomes and is associated with active transcription and mRNA processing. Nucleosomes wrap and compact DNA into chromatin, limiting DNA accessibility to the cellular machineries which require DNA as a template. Histones thereby play a central role in transcription regulation, DNA repair, DNA replication and chromosomal stability. Nucleosomes containing this histone are less rigid and organize less DNA than canonical nucleosomes in vivo. They are enriched in actively transcribed genes and associate with the elongating form of RNA polymerase. They associate with spliceosome components and are required for mRNA splicing. May participate in spermatogenesis. This Homo sapiens (Human) protein is Histone H2A-Bbd type 2/3.